Reading from the N-terminus, the 123-residue chain is Large ribosomal subunit protein uL18 (123 aa).

Belongs to the universal ribosomal protein uL18 family. Part of the 50S ribosomal subunit; part of the 5S rRNA/L5/L18/L25 subcomplex. Contacts the 5S and 23S rRNAs.

Functionally, this is one of the proteins that bind and probably mediate the attachment of the 5S RNA into the large ribosomal subunit, where it forms part of the central protuberance. This Chlamydia trachomatis serovar A (strain ATCC VR-571B / DSM 19440 / HAR-13) protein is Large ribosomal subunit protein uL18.